We begin with the raw amino-acid sequence, 82 residues long: Small ribosomal subunit protein uS17 (82 aa).

This sequence belongs to the universal ribosomal protein uS17 family. In terms of assembly, part of the 30S ribosomal subunit.

Its function is as follows. One of the primary rRNA binding proteins, it binds specifically to the 5'-end of 16S ribosomal RNA. The protein is Small ribosomal subunit protein uS17 of Nitrobacter hamburgensis (strain DSM 10229 / NCIMB 13809 / X14).